The primary structure comprises 104 residues: Gastrin (104 aa).

A signal peptide spans M1–A21. The propeptide occupies S22–R58. Positions F27–H67 are disordered. Positions R40–R49 are enriched in basic and acidic residues. Q59 is modified (pyrrolidone carboxylic acid; in form big gastrin). The residue at position 76 (Q76) is a Pyrrolidone carboxylic acid; in form gastrin. The residue at position 87 (Y87) is a Sulfotyrosine; partial. The residue at position 92 (F92) is a Phenylalanine amide. The residue at position 96 (S96) is a Phosphoserine. A propeptide spanning residues S96–P104 is cleaved from the precursor.

The protein belongs to the gastrin/cholecystokinin family. In terms of processing, sulfation enhances proteolytic processing, and blocks peptide degradation. Levels of sulfation differ between proteolytically-cleaved gastrins. Thus, gastrin-6 is almost 73% sulfated, whereas the larger gastrins are less than 50% sulfated. Sulfation levels are also tissue-specific.

It localises to the secreted. Functionally, gastrin stimulates the stomach mucosa to produce and secrete hydrochloric acid and the pancreas to secrete its digestive enzymes. It also stimulates smooth muscle contraction and increases blood circulation and water secretion in the stomach and intestine. The polypeptide is Gastrin (GAST) (Sus scrofa (Pig)).